A 743-amino-acid chain; its full sequence is Phosphoribosylformylglycinamidine synthase subunit PurL (743 aa).

The active site involves His-50. The ATP site is built by Tyr-53 and Lys-92. Glu-94 lines the Mg(2+) pocket. Substrate-binding positions include 95–98 (SHNH) and Arg-117. His-96 functions as the Proton acceptor in the catalytic mechanism. Residue Asp-118 coordinates Mg(2+). Gln-241 serves as a coordination point for substrate. Residue Asp-269 participates in Mg(2+) binding. Position 313–315 (313–315 (ESQ)) interacts with substrate. Positions 495 and 532 each coordinate ATP. Asn-533 contacts Mg(2+). Ser-535 contacts substrate.

Belongs to the FGAMS family. In terms of assembly, monomer. Part of the FGAM synthase complex composed of 1 PurL, 1 PurQ and 2 PurS subunits.

The protein localises to the cytoplasm. The catalysed reaction is N(2)-formyl-N(1)-(5-phospho-beta-D-ribosyl)glycinamide + L-glutamine + ATP + H2O = 2-formamido-N(1)-(5-O-phospho-beta-D-ribosyl)acetamidine + L-glutamate + ADP + phosphate + H(+). It participates in purine metabolism; IMP biosynthesis via de novo pathway; 5-amino-1-(5-phospho-D-ribosyl)imidazole from N(2)-formyl-N(1)-(5-phospho-D-ribosyl)glycinamide: step 1/2. Part of the phosphoribosylformylglycinamidine synthase complex involved in the purines biosynthetic pathway. Catalyzes the ATP-dependent conversion of formylglycinamide ribonucleotide (FGAR) and glutamine to yield formylglycinamidine ribonucleotide (FGAM) and glutamate. The FGAM synthase complex is composed of three subunits. PurQ produces an ammonia molecule by converting glutamine to glutamate. PurL transfers the ammonia molecule to FGAR to form FGAM in an ATP-dependent manner. PurS interacts with PurQ and PurL and is thought to assist in the transfer of the ammonia molecule from PurQ to PurL. The sequence is that of Phosphoribosylformylglycinamidine synthase subunit PurL from Rhizobium leguminosarum bv. trifolii (strain WSM2304).